Here is a 451-residue protein sequence, read N- to C-terminus: MTSRSYCVVGGGISGLTAAYRLRVATGDDVAITLFDPGDRLGGVLRTECVGGQPMDLGAEAFLLRRPEVPALLAELGLSERQRATTDARPLIYSQQRLHSLPPDTVAGIPSSATSVAGLVDDATVARIGAEAVRPLSWEPGSDPAMAELVADRFGEQAVARLVDPLLGGVYAGSAATIGLRAGAPSVAAALDCGATSLMEAVRQGLPPVAAGPVFGALDGGYQVLIDELVRRSRLQWVAATVVGLDRGTCGWTLVDDTGACWSADGVILAVPAPRLVRLLQQIAPRTVAAASRIVSASSAVVALSVPRDTTFPQNSGVLVASGERLRAKAVTLSSRKWGLQGDTQLVRLSFGKFGDQVASTASDDELLAWAVSDLAAVFDVTVDPVDVCVQRWIDAMPQYGPGHADLVAEVRAGLPPTLVVAGSHMDGIGVPACISAAGRAIEALQAEVAR.

FAD is bound by residues 10-15 (GGGISG), 36-37 (DP), 58-61 (GAEA), Val-242, Trp-393, and 429-431 (IGV).

Belongs to the protoporphyrinogen/coproporphyrinogen oxidase family. Coproporphyrinogen III oxidase subfamily. It depends on FAD as a cofactor.

The protein localises to the cytoplasm. It catalyses the reaction coproporphyrinogen III + 3 O2 = coproporphyrin III + 3 H2O2. The protein operates within porphyrin-containing compound metabolism; protoheme biosynthesis. Its function is as follows. Involved in coproporphyrin-dependent heme b biosynthesis. Catalyzes the oxidation of coproporphyrinogen III to coproporphyrin III. The protein is Coproporphyrinogen III oxidase of Mycobacterium leprae (strain TN).